Here is a 186-residue protein sequence, read N- to C-terminus: Tumor necrosis factor alpha-induced protein 8-like protein 1 (186 aa).

This sequence belongs to the TNFAIP8 family. In terms of assembly, interacts with FBXW5; TNFAIP8L1 competes with TSC2 to bind FBXW5 increasing TSC2 stability by preventing its ubiquitination.

The protein resides in the cytoplasm. Functionally, acts as a negative regulator of mTOR activity. The polypeptide is Tumor necrosis factor alpha-induced protein 8-like protein 1 (TNFAIP8L1) (Bos taurus (Bovine)).